Consider the following 401-residue polypeptide: Argininosuccinate synthase (401 aa).

8–16 contributes to the ATP binding site; that stretch reads AYSGGLDTT. Position 87 (Tyr-87) interacts with L-citrulline. Gly-117 is an ATP binding site. Residues Thr-119, Asn-123, and Asp-124 each coordinate L-aspartate. Residue Asn-123 coordinates L-citrulline. L-citrulline is bound by residues Arg-127, Ser-175, Glu-259, and Tyr-271.

The protein belongs to the argininosuccinate synthase family. Type 1 subfamily. Homotetramer.

The protein localises to the cytoplasm. It catalyses the reaction L-citrulline + L-aspartate + ATP = 2-(N(omega)-L-arginino)succinate + AMP + diphosphate + H(+). Its pathway is amino-acid biosynthesis; L-arginine biosynthesis; L-arginine from L-ornithine and carbamoyl phosphate: step 2/3. The polypeptide is Argininosuccinate synthase (Corynebacterium glutamicum (strain ATCC 13032 / DSM 20300 / JCM 1318 / BCRC 11384 / CCUG 27702 / LMG 3730 / NBRC 12168 / NCIMB 10025 / NRRL B-2784 / 534)).